A 506-amino-acid polypeptide reads, in one-letter code: Protoheme IX farnesyltransferase, mitochondrial (506 aa).

The transit peptide at 1–42 directs the protein to the mitochondrion; that stretch reads MILRSSLGRLGVARESPLCLQCLNRSRPSFPAVNKLASISRL. The segment covering 45 to 61 has biased composition (polar residues); the sequence is TVAGQSPSSSVNKTYFS. The interval 45 to 131 is disordered; sequence TVAGQSPSSS…AEPVIPPDAS (87 aa). Over residues 73 to 88 the composition is skewed to low complexity; it reads PSLFTSLSPSNSPSQL. The segment covering 89 to 100 has biased composition (polar residues); that stretch reads NRGHSTPSTSPE. Transmembrane regions (helical) follow at residues 163–183, 199–221, 247–267, 269–289, 297–317, 337–357, 390–410, and 439–459; these read FLVL…SILA, LTFL…LNMI, AAVF…YFGT, PTVT…YTPL, TWIG…AAAG, LGGW…FNAL, VLMF…HGFL, and GLFW…LVTK.

Belongs to the UbiA prenyltransferase family.

Its subcellular location is the mitochondrion membrane. It carries out the reaction heme b + (2E,6E)-farnesyl diphosphate + H2O = Fe(II)-heme o + diphosphate. Its function is as follows. Converts protoheme IX and farnesyl diphosphate to heme O. In Emericella nidulans (strain FGSC A4 / ATCC 38163 / CBS 112.46 / NRRL 194 / M139) (Aspergillus nidulans), this protein is Protoheme IX farnesyltransferase, mitochondrial (cox10).